Reading from the N-terminus, the 161-residue chain is 6,7-dimethyl-8-ribityllumazine synthase (161 aa).

5-amino-6-(D-ribitylamino)uracil is bound by residues tryptophan 31, 63-65, and 85-87; these read SFE and VVI. 90–91 serves as a coordination point for (2S)-2-hydroxy-3-oxobutyl phosphate; it reads GT. Histidine 93 serves as the catalytic Proton donor. Phenylalanine 118 is a 5-amino-6-(D-ribitylamino)uracil binding site. (2S)-2-hydroxy-3-oxobutyl phosphate is bound at residue arginine 132.

Belongs to the DMRL synthase family.

The catalysed reaction is (2S)-2-hydroxy-3-oxobutyl phosphate + 5-amino-6-(D-ribitylamino)uracil = 6,7-dimethyl-8-(1-D-ribityl)lumazine + phosphate + 2 H2O + H(+). Its pathway is cofactor biosynthesis; riboflavin biosynthesis; riboflavin from 2-hydroxy-3-oxobutyl phosphate and 5-amino-6-(D-ribitylamino)uracil: step 1/2. In terms of biological role, catalyzes the formation of 6,7-dimethyl-8-ribityllumazine by condensation of 5-amino-6-(D-ribitylamino)uracil with 3,4-dihydroxy-2-butanone 4-phosphate. This is the penultimate step in the biosynthesis of riboflavin. This chain is 6,7-dimethyl-8-ribityllumazine synthase, found in Arthrobacter sp. (strain FB24).